A 907-amino-acid chain; its full sequence is Protein translocase subunit SecA (907 aa).

ATP-binding positions include Gln87, 105 to 109, and Asp510; that span reads GEGKT. Cys892, Cys894, Cys903, and His904 together coordinate Zn(2+).

It belongs to the SecA family. Monomer and homodimer. Part of the essential Sec protein translocation apparatus which comprises SecA, SecYEG and auxiliary proteins SecDF-YajC and YidC. It depends on Zn(2+) as a cofactor.

The protein localises to the cell inner membrane. It is found in the cytoplasm. The catalysed reaction is ATP + H2O + cellular proteinSide 1 = ADP + phosphate + cellular proteinSide 2.. Its function is as follows. Part of the Sec protein translocase complex. Interacts with the SecYEG preprotein conducting channel. Has a central role in coupling the hydrolysis of ATP to the transfer of proteins into and across the cell membrane, serving both as a receptor for the preprotein-SecB complex and as an ATP-driven molecular motor driving the stepwise translocation of polypeptide chains across the membrane. This Acinetobacter baumannii (strain ACICU) protein is Protein translocase subunit SecA.